The chain runs to 166 residues: MTVPLEAEGLIGKHYRQLDHFQVGREKIREFAIAVKDDHPTHYNETAAFEAGYPALVAPLTFLAIAGRRVQLEIFTKFNIPINVARVFHRDQKFRFYRTILAQDKLYFDTYLDSVIESHGTVIAEVRSEVTDTEGKAVVTSIVTMLGELARQDATAEETVAAIASI.

Residues 10-131 enclose the MaoC-like domain; that stretch reads LIGKHYRQLD…VIAEVRSEVT (122 aa).

This sequence belongs to the UPF0336 family.

The sequence is that of UPF0336 protein ML2425 from Mycobacterium leprae (strain TN).